Consider the following 125-residue polypeptide: Fluoride-specific ion channel FluC (125 aa).

4 helical membrane passes run 4–24 (ILLV…VGLW), 32–52 (AFPW…GFLA), 68–88 (FLIT…LDAI), and 100–120 (LAYI…GLAL). Residues glycine 75 and threonine 78 each contribute to the Na(+) site.

Belongs to the fluoride channel Fluc/FEX (TC 1.A.43) family.

The protein localises to the cell inner membrane. The catalysed reaction is fluoride(in) = fluoride(out). Its activity is regulated as follows. Na(+) is not transported, but it plays an essential structural role and its presence is essential for fluoride channel function. Its function is as follows. Fluoride-specific ion channel. Important for reducing fluoride concentration in the cell, thus reducing its toxicity. The protein is Fluoride-specific ion channel FluC of Rhizobium meliloti (strain 1021) (Ensifer meliloti).